Here is a 157-residue protein sequence, read N- to C-terminus: Cytochrome c-type biogenesis protein CcmE (157 aa).

Residues 1–7 (MTPRQRR) lie on the Cytoplasmic side of the membrane. A helical; Signal-anchor for type II membrane protein membrane pass occupies residues 8-28 (LGLLAAALACCGVAAALVLNA). Over 29-157 (FRANLVFFFS…GAMAAQELRR (129 aa)) the chain is Periplasmic. Heme-binding residues include His-123 and Tyr-127.

Belongs to the CcmE/CycJ family.

Its subcellular location is the cell inner membrane. Heme chaperone required for the biogenesis of c-type cytochromes. Transiently binds heme delivered by CcmC and transfers the heme to apo-cytochromes in a process facilitated by CcmF and CcmH. The sequence is that of Cytochrome c-type biogenesis protein CcmE from Cupriavidus taiwanensis (strain DSM 17343 / BCRC 17206 / CCUG 44338 / CIP 107171 / LMG 19424 / R1) (Ralstonia taiwanensis (strain LMG 19424)).